We begin with the raw amino-acid sequence, 349 residues long: Phosphate acyltransferase (349 aa).

This sequence belongs to the PlsX family. As to quaternary structure, homodimer. Probably interacts with PlsY.

Its subcellular location is the cytoplasm. The enzyme catalyses a fatty acyl-[ACP] + phosphate = an acyl phosphate + holo-[ACP]. It functions in the pathway lipid metabolism; phospholipid metabolism. Catalyzes the reversible formation of acyl-phosphate (acyl-PO(4)) from acyl-[acyl-carrier-protein] (acyl-ACP). This enzyme utilizes acyl-ACP as fatty acyl donor, but not acyl-CoA. The polypeptide is Phosphate acyltransferase (Albidiferax ferrireducens (strain ATCC BAA-621 / DSM 15236 / T118) (Rhodoferax ferrireducens)).